Here is a 306-residue protein sequence, read N- to C-terminus: Pyridoxal 5'-phosphate synthase subunit PdxS (306 aa).

Aspartate 36 contributes to the D-ribose 5-phosphate binding site. Lysine 93 acts as the Schiff-base intermediate with D-ribose 5-phosphate in catalysis. Glycine 165 is a binding site for D-ribose 5-phosphate. Residue arginine 177 participates in D-glyceraldehyde 3-phosphate binding. Residues glycine 226 and 247-248 contribute to the D-ribose 5-phosphate site; that span reads GS.

Belongs to the PdxS/SNZ family. In the presence of PdxT, forms a dodecamer of heterodimers.

It catalyses the reaction aldehydo-D-ribose 5-phosphate + D-glyceraldehyde 3-phosphate + L-glutamine = pyridoxal 5'-phosphate + L-glutamate + phosphate + 3 H2O + H(+). It functions in the pathway cofactor biosynthesis; pyridoxal 5'-phosphate biosynthesis. In terms of biological role, catalyzes the formation of pyridoxal 5'-phosphate from ribose 5-phosphate (RBP), glyceraldehyde 3-phosphate (G3P) and ammonia. The ammonia is provided by the PdxT subunit. Can also use ribulose 5-phosphate and dihydroxyacetone phosphate as substrates, resulting from enzyme-catalyzed isomerization of RBP and G3P, respectively. In Corynebacterium urealyticum (strain ATCC 43042 / DSM 7109), this protein is Pyridoxal 5'-phosphate synthase subunit PdxS.